The following is a 663-amino-acid chain: UvrABC system protein B (663 aa).

One can recognise a Helicase ATP-binding domain in the interval 30–414 (EGIKAGKRHQ…IEHTDKMVEQ (385 aa)). Residue 43–50 (GATGTGKT) coordinates ATP. Positions 96–119 (YYDYYQPEAYVPSTDTFIEKDASI) match the Beta-hairpin motif. In terms of domain architecture, Helicase C-terminal spans 434–600 (QIDDLLSEIQ…TINKKIHDLI (167 aa)). One can recognise a UVR domain in the interval 627-662 (QKTIDNIEKEMKQAAKDLDFEKATELRDMLFELKAE).

It belongs to the UvrB family. Forms a heterotetramer with UvrA during the search for lesions. Interacts with UvrC in an incision complex.

The protein localises to the cytoplasm. Its function is as follows. The UvrABC repair system catalyzes the recognition and processing of DNA lesions. A damage recognition complex composed of 2 UvrA and 2 UvrB subunits scans DNA for abnormalities. Upon binding of the UvrA(2)B(2) complex to a putative damaged site, the DNA wraps around one UvrB monomer. DNA wrap is dependent on ATP binding by UvrB and probably causes local melting of the DNA helix, facilitating insertion of UvrB beta-hairpin between the DNA strands. Then UvrB probes one DNA strand for the presence of a lesion. If a lesion is found the UvrA subunits dissociate and the UvrB-DNA preincision complex is formed. This complex is subsequently bound by UvrC and the second UvrB is released. If no lesion is found, the DNA wraps around the other UvrB subunit that will check the other stand for damage. The chain is UvrABC system protein B from Staphylococcus aureus (strain MSSA476).